The chain runs to 141 residues: Endoribonuclease YbeY (141 aa).

Zn(2+) is bound by residues His-105, His-109, and Asp-115.

This sequence belongs to the endoribonuclease YbeY family. Zn(2+) serves as cofactor.

Its subcellular location is the cytoplasm. Functionally, single strand-specific metallo-endoribonuclease involved in late-stage 70S ribosome quality control and in maturation of the 3' terminus of the 16S rRNA. This Chlorobaculum parvum (strain DSM 263 / NCIMB 8327) (Chlorobium vibrioforme subsp. thiosulfatophilum) protein is Endoribonuclease YbeY.